A 344-amino-acid polypeptide reads, in one-letter code: Methylthioribose-1-phosphate isomerase (344 aa).

Substrate is bound by residues 46–48 (RGA), arginine 89, and glutamine 196. Aspartate 237 functions as the Proton donor in the catalytic mechanism. 247 to 248 (NK) is a substrate binding site.

It belongs to the eIF-2B alpha/beta/delta subunits family. MtnA subfamily.

It catalyses the reaction 5-(methylsulfanyl)-alpha-D-ribose 1-phosphate = 5-(methylsulfanyl)-D-ribulose 1-phosphate. It participates in amino-acid biosynthesis; L-methionine biosynthesis via salvage pathway; L-methionine from S-methyl-5-thio-alpha-D-ribose 1-phosphate: step 1/6. Catalyzes the interconversion of methylthioribose-1-phosphate (MTR-1-P) into methylthioribulose-1-phosphate (MTRu-1-P). The polypeptide is Methylthioribose-1-phosphate isomerase (Syntrophotalea carbinolica (strain DSM 2380 / NBRC 103641 / GraBd1) (Pelobacter carbinolicus)).